The sequence spans 822 residues: Structure-specific endonuclease subunit SLX4 (822 aa).

Disordered regions lie at residues 1–39 (MSHLDLTRHRTRSPSPSQIFGSSTTPVATNSTHSEPSAS), 73–117 (TPAV…PRPL), 277–362 (GTTN…GVSD), 390–418 (RVSSDEDKLGVPSAPASSRQSARDRTSVS), 456–507 (KSHE…SGQL), and 589–676 (KNSA…QASS). Positions 13–39 (SPSPSQIFGSSTTPVATNSTHSEPSAS) are enriched in polar residues. Residues 280 to 294 (NSSSSEGSSNKSSGK) are compositionally biased toward low complexity. The span at 310–320 (VTTITSLSTAQ) shows a compositional bias: polar residues. Residues 342 to 354 (GKRSKSQTKKGGN) are compositionally biased toward basic residues. Residues 460-470 (SSTLTLPSTST) are compositionally biased toward low complexity. Polar residues predominate over residues 471–484 (NASNQGFSSQNTIN). Residues 490–506 (SQTTSTTTESTGVESGQ) show a composition bias toward low complexity. Polar residues predominate over residues 589–612 (KNSAPTSLPANNANPPDSHASGQK). The segment covering 627-636 (TTKRASKAPQ) has biased composition (basic residues). A compositionally biased stretch (low complexity) spans 637 to 650 (KKQSTSSTSHSAKA).

It belongs to the SLX4 family. In terms of assembly, forms a heterodimer with SLX1. In terms of processing, phosphorylated in response to DNA damage.

Its subcellular location is the nucleus. Regulatory subunit of the SLX1-SLX4 structure-specific endonuclease that resolves DNA secondary structures generated during DNA repair and recombination. Has endonuclease activity towards branched DNA substrates, introducing single-strand cuts in duplex DNA close to junctions with ss-DNA. This Coccidioides immitis (strain RS) (Valley fever fungus) protein is Structure-specific endonuclease subunit SLX4.